Consider the following 68-residue polypeptide: Conotoxin tx3b (68 aa).

Residues 1-19 form the signal peptide; the sequence is MSKLGALLTICLLLFSLTA. Residues 20–52 constitute a propeptide that is removed on maturation; sequence VPLDGDQHADQPAQRLQDRIPTEDHPLFDPNKR. 3 disulfides stabilise this stretch: C53-C67, C54-C63, and C59-C66. Residue M61 is modified to Methionine sulfoxide; partial. Cysteine amide is present on C67.

Expressed by the venom duct.

Its subcellular location is the secreted. Its function is as follows. Intracranial injection into mice causes scratching, hyperactivity and circular motion. This chain is Conotoxin tx3b, found in Conus textile (Cloth-of-gold cone).